Here is a 131-residue protein sequence, read N- to C-terminus: Large ribosomal subunit protein bL12 (131 aa).

It belongs to the bacterial ribosomal protein bL12 family. As to quaternary structure, homodimer. Part of the ribosomal stalk of the 50S ribosomal subunit. Forms a multimeric L10(L12)X complex, where L10 forms an elongated spine to which 2 to 4 L12 dimers bind in a sequential fashion. Binds GTP-bound translation factors.

Its function is as follows. Forms part of the ribosomal stalk which helps the ribosome interact with GTP-bound translation factors. Is thus essential for accurate translation. This is Large ribosomal subunit protein bL12 from Nocardioides sp. (strain ATCC BAA-499 / JS614).